A 93-amino-acid chain; its full sequence is DNA/RNA-binding protein Alba 2 (93 aa).

The protein belongs to the histone-like Alba family.

The protein localises to the cytoplasm. Its subcellular location is the chromosome. Functionally, binds double-stranded DNA tightly but without sequence specificity. Involved in DNA compaction. This Methanopyrus kandleri (strain AV19 / DSM 6324 / JCM 9639 / NBRC 100938) protein is DNA/RNA-binding protein Alba 2.